The sequence spans 1358 residues: Mediator of RNA polymerase II transcription subunit 12 (1358 aa).

The stretch at 629 to 654 (VRYNYEQLQIQLNTAKEQMLQEQFEH) forms a coiled coil.

It belongs to the Mediator complex subunit 12 family. As to quaternary structure, component of the SRB8-11 complex, which itself associates with the Mediator complex.

It localises to the nucleus. Its function is as follows. Component of the SRB8-11 complex. The SRB8-11 complex is a regulatory module of the Mediator complex which is itself involved in regulation of basal and activated RNA polymerase II-dependent transcription. The SRB8-11 complex may be involved in the transcriptional repression of a subset of genes regulated by Mediator. It may inhibit the association of the Mediator complex with RNA polymerase II to form the holoenzyme complex. The protein is Mediator of RNA polymerase II transcription subunit 12 (SRB8) of Eremothecium gossypii (strain ATCC 10895 / CBS 109.51 / FGSC 9923 / NRRL Y-1056) (Yeast).